Reading from the N-terminus, the 137-residue chain is MGLLDHLWDDTVAGPRPENGLGKLRKHHTFSFRPSSGNDQSEAGSARSYGEDSLPEEAVKVTRSIMIIKPPGYQGSSAPASPAGSTPPLSPFSPPLSPFSGGKEPFRFRRRSTSDAFEKAAGGSETGPRSSPPTYGM.

2 disordered regions span residues 1 to 55 (MGLL…DSLP) and 69 to 137 (KPPG…TYGM). Over residues 32–43 (FRPSSGNDQSEA) the composition is skewed to polar residues. Residues 70-87 (PPGYQGSSAPASPAGSTP) show a composition bias toward low complexity. Position 81 is a phosphoserine (Ser81). Positions 88–97 (PLSPFSPPLS) are enriched in pro residues. Basic and acidic residues predominate over residues 104 to 118 (EPFRFRRRSTSDAFE). Polar residues predominate over residues 127 to 137 (GPRSSPPTYGM).

Belongs to the DRM1/ARP family.

The chain is Dormancy-associated protein homolog 3 from Arabidopsis thaliana (Mouse-ear cress).